Here is a 1124-residue protein sequence, read N- to C-terminus: Eukaryotic translation initiation factor 3 subunit A (1124 aa).

Residues 96 to 124 adopt a coiled-coil conformation; it reads LKMAEERTEQAQQQSSQATVDIDDLDNLA. Positions 317–498 constitute a PCI domain; sequence IQRMTTHVLI…ECVHFGTDLS (182 aa). Composition is skewed to basic and acidic residues over residues 812-851 and 860-883; these read EERR…RQLA and EVER…ERRP. The segment at 812 to 1124 is disordered; that stretch reads EERRRIEEEL…EEGWTDVKHR (313 aa). The span at 900–910 shows a compositional bias: low complexity; it reads PAAAAPANPAA. Basic and acidic residues-rich tracts occupy residues 928-952, 960-990, 1007-1048, and 1063-1100; these read PRER…EKDG, RGGD…DRGP, PRRD…RGGG, and DDNR…EARP.

It belongs to the eIF-3 subunit A family. Component of the eukaryotic translation initiation factor 3 (eIF-3) complex.

Its subcellular location is the cytoplasm. Functionally, RNA-binding component of the eukaryotic translation initiation factor 3 (eIF-3) complex, which is involved in protein synthesis of a specialized repertoire of mRNAs and, together with other initiation factors, stimulates binding of mRNA and methionyl-tRNAi to the 40S ribosome. The eIF-3 complex specifically targets and initiates translation of a subset of mRNAs involved in cell proliferation. The protein is Eukaryotic translation initiation factor 3 subunit A of Anopheles gambiae (African malaria mosquito).